The following is a 644-amino-acid chain: Exoribonuclease 2 (644 aa).

Residues 189-516 (RRDLTALDFV…NHRLLKAIIK (328 aa)) enclose the RNB domain. Residues 561–643 (DTRFAAEILD…ETRSIIARPA (83 aa)) form the S1 motif domain.

The protein belongs to the RNR ribonuclease family. RNase II subfamily.

It localises to the cytoplasm. The catalysed reaction is Exonucleolytic cleavage in the 3'- to 5'-direction to yield nucleoside 5'-phosphates.. Functionally, involved in mRNA degradation. Hydrolyzes single-stranded polyribonucleotides processively in the 3' to 5' direction. This Klebsiella pneumoniae (strain 342) protein is Exoribonuclease 2.